The chain runs to 383 residues: UDP-N-acetylenolpyruvoylglucosamine reductase (383 aa).

Residues 42-212 enclose the FAD-binding PCMH-type domain; that stretch reads LSCQAMQLIT…TRVGFKLHKD (171 aa). The active site involves R189. S267 functions as the Proton donor in the catalytic mechanism. E369 is an active-site residue.

Belongs to the MurB family. FAD is required as a cofactor.

It localises to the cytoplasm. The enzyme catalyses UDP-N-acetyl-alpha-D-muramate + NADP(+) = UDP-N-acetyl-3-O-(1-carboxyvinyl)-alpha-D-glucosamine + NADPH + H(+). Its pathway is cell wall biogenesis; peptidoglycan biosynthesis. Cell wall formation. The protein is UDP-N-acetylenolpyruvoylglucosamine reductase of Psychrobacter sp. (strain PRwf-1).